We begin with the raw amino-acid sequence, 72 residues long: Translation initiation factor IF-1 (72 aa).

Residues 1 to 72 enclose the S1-like domain; it reads MAREDLIEVE…SRGRITYRKK (72 aa).

This sequence belongs to the IF-1 family. Component of the 30S ribosomal translation pre-initiation complex which assembles on the 30S ribosome in the order IF-2 and IF-3, IF-1 and N-formylmethionyl-tRNA(fMet); mRNA recruitment can occur at any time during PIC assembly.

It is found in the cytoplasm. In terms of biological role, one of the essential components for the initiation of protein synthesis. Stabilizes the binding of IF-2 and IF-3 on the 30S subunit to which N-formylmethionyl-tRNA(fMet) subsequently binds. Helps modulate mRNA selection, yielding the 30S pre-initiation complex (PIC). Upon addition of the 50S ribosomal subunit IF-1, IF-2 and IF-3 are released leaving the mature 70S translation initiation complex. The chain is Translation initiation factor IF-1 from Acholeplasma laidlawii (strain PG-8A).